Here is a 294-residue protein sequence, read N- to C-terminus: NAD kinase (294 aa).

Aspartate 73 serves as the catalytic Proton acceptor. Residues 73–74, 147–148, histidine 158, arginine 175, aspartate 177, and 188–193 each bind NAD(+); these read DG, NE, and TAYALS.

It belongs to the NAD kinase family. A divalent metal cation serves as cofactor.

The protein localises to the cytoplasm. The enzyme catalyses NAD(+) + ATP = ADP + NADP(+) + H(+). Its function is as follows. Involved in the regulation of the intracellular balance of NAD and NADP, and is a key enzyme in the biosynthesis of NADP. Catalyzes specifically the phosphorylation on 2'-hydroxyl of the adenosine moiety of NAD to yield NADP. The chain is NAD kinase from Tolumonas auensis (strain DSM 9187 / NBRC 110442 / TA 4).